We begin with the raw amino-acid sequence, 124 residues long: UPF0231 protein Sbal223_3655 (124 aa).

It belongs to the UPF0231 family.

The chain is UPF0231 protein Sbal223_3655 from Shewanella baltica (strain OS223).